The primary structure comprises 494 residues: Nicotianamine aminotransferase 1 (494 aa).

2 stretches are compositionally biased toward low complexity: residues 24 to 38 and 48 to 62; these read SGTS…TSSS and STAM…AASS. The disordered stretch occupies residues 24 to 76; the sequence is SGTSYPTRTTTTSSSAPEFTNKKQSTAMAPTTAAAAASSNGGGESDGSSKEWR. At Lys-322 the chain carries N6-(pyridoxal phosphate)lysine.

Belongs to the class-I pyridoxal-phosphate-dependent aminotransferase family. Pyridoxal 5'-phosphate is required as a cofactor. Expressed in companion and pericycle cells adjacent to the protoxylem of roots. Expressed in companion cells of shoots.

It carries out the reaction nicotianamine + 2-oxoglutarate = 3''-deamino-3''-oxonicotianamine + L-glutamate. Involved in biosynthesis of mugineic acid family phytosiderophores, which are ferric iron chelators produced in graminaceous plants in response to iron deficiency. This is Nicotianamine aminotransferase 1 from Oryza sativa subsp. japonica (Rice).